A 491-amino-acid polypeptide reads, in one-letter code: Ran-binding protein 3-like (491 aa).

The region spanning 270–441 (TFKSVLKFPN…VALRSLAKQG (172 aa)) is the RanBD1 domain. Residues 440-468 (QGDGGPAESQSDTALPQLNGESCDEDEDE) are disordered. Residues 447-459 (ESQSDTALPQLNG) show a composition bias toward polar residues.

In terms of assembly, interacts with SMAD1, SMAD5 and SMAD8.

The protein localises to the nucleus. It localises to the cytoplasm. Functionally, nuclear export factor for BMP-specific SMAD1/5/8 that plays a critical role in terminating BMP signaling and regulating mesenchymal stem cell differentiation by blocking osteoblast differentiation to promote myogenic differention. Directly recognizes dephosphorylated SMAD1/5/8 and mediates their nuclear export in a Ran-dependent manner. This chain is Ran-binding protein 3-like (Ranbp3l), found in Mus musculus (Mouse).